A 274-amino-acid polypeptide reads, in one-letter code: Diaminopimelate epimerase (274 aa).

3 residues coordinate substrate: N11, Q44, and N64. Catalysis depends on C73, which acts as the Proton donor. Substrate contacts are provided by residues 74–75 (GN), N157, N190, and 208–209 (ER). Residue C217 is the Proton acceptor of the active site. 218 to 219 (GS) lines the substrate pocket.

This sequence belongs to the diaminopimelate epimerase family. In terms of assembly, homodimer.

It is found in the cytoplasm. It catalyses the reaction (2S,6S)-2,6-diaminopimelate = meso-2,6-diaminopimelate. It functions in the pathway amino-acid biosynthesis; L-lysine biosynthesis via DAP pathway; DL-2,6-diaminopimelate from LL-2,6-diaminopimelate: step 1/1. Functionally, catalyzes the stereoinversion of LL-2,6-diaminopimelate (L,L-DAP) to meso-diaminopimelate (meso-DAP), a precursor of L-lysine and an essential component of the bacterial peptidoglycan. In Escherichia fergusonii (strain ATCC 35469 / DSM 13698 / CCUG 18766 / IAM 14443 / JCM 21226 / LMG 7866 / NBRC 102419 / NCTC 12128 / CDC 0568-73), this protein is Diaminopimelate epimerase.